Here is a 114-residue protein sequence, read N- to C-terminus: Cytochrome c oxidase assembly protein cox16, mitochondrial (114 aa).

A helical transmembrane segment spans residues Pro29–Thr49.

This sequence belongs to the COX16 family.

Its subcellular location is the mitochondrion inner membrane. Required for the assembly of the mitochondrial respiratory chain complex IV (CIV), also known as cytochrome c oxidase. May participate in merging the COX1 and COX2 assembly lines. This chain is Cytochrome c oxidase assembly protein cox16, mitochondrial (cox-9), found in Neurospora crassa (strain ATCC 24698 / 74-OR23-1A / CBS 708.71 / DSM 1257 / FGSC 987).